The chain runs to 130 residues: Small ribosomal subunit protein uS9 (130 aa).

It belongs to the universal ribosomal protein uS9 family.

The sequence is that of Small ribosomal subunit protein uS9 from Burkholderia vietnamiensis (strain G4 / LMG 22486) (Burkholderia cepacia (strain R1808)).